Here is a 1085-residue protein sequence, read N- to C-terminus: Cell wall protein IFF6 (1085 aa).

Positions M1–A19 are cleaved as a signal peptide. Positions P339–Q1060 are disordered. The span at G342–S528 shows a compositional bias: low complexity. Residues T529–E538 are compositionally biased toward acidic residues. Positions S539–G828 are enriched in low complexity. 25 N-linked (GlcNAc...) asparagine glycosylation sites follow: N659, N782, N854, N860, N864, N874, N882, N886, N890, N896, N900, N910, N924, N932, N938, N952, N960, N964, N968, N976, N980, N992, N996, N1008, and N1016. Gly residues predominate over residues N847 to S1010. Residues S1018–Q1028 are compositionally biased toward gly residues. A compositionally biased stretch (low complexity) spans G1031 to S1052. N1062 carries the GPI-anchor amidated asparagine lipid modification. The propeptide at S1063–M1085 is removed in mature form.

This sequence belongs to the HYR1/IFF family. The GPI-anchor is attached to the protein in the endoplasmic reticulum and serves to target the protein to the cell surface. There, the glucosamine-inositol phospholipid moiety is cleaved off and the GPI-modified mannoprotein is covalently attached via its lipidless GPI glycan remnant to the 1,6-beta-glucan of the outer cell wall layer.

It localises to the secreted. The protein localises to the cell wall. The protein resides in the membrane. In terms of biological role, GPI-anchored cell wall protein involved in cell wall organization, hyphal growth, as well as in host-fungal interaction and virulence. The chain is Cell wall protein IFF6 (IFF6) from Candida albicans (strain SC5314 / ATCC MYA-2876) (Yeast).